Here is a 305-residue protein sequence, read N- to C-terminus: Peroxisome assembly protein 26 (305 aa).

Residues 1–25 (MKSDCSTSAAPFRGLGGPLRSSEPV) form a disordered region. At 1–246 (MKSDCSTSAA…RQLWDSAVSH (246 aa)) the chain is on the cytoplasmic side. A helical; Signal-anchor for type II membrane protein transmembrane segment spans residues 247–267 (FFSLPFKKSLLAALILCLLVV). At 268-305 (RFDPASPSSLPSLYKLAQLFRWIRKAASSRLYQLRIRD) the chain is on the peroxisomal matrix side.

Belongs to the peroxin-26 family. As to quaternary structure, interacts (via its cytoplasmic domain) with PEX6; interaction is direct and is ATP-dependent. Interacts with PEX1; interaction is indirect and is mediated via interaction with PEX6.

It localises to the peroxisome membrane. Functionally, peroxisomal docking factor that anchors PEX1 and PEX6 to peroxisome membranes. PEX26 is therefore required for the formation of the PEX1-PEX6 AAA ATPase complex, a complex that mediates the extraction of the PEX5 receptor from peroxisomal membrane. This is Peroxisome assembly protein 26 (PEX26) from Macaca fascicularis (Crab-eating macaque).